A 149-amino-acid polypeptide reads, in one-letter code: Transcriptional repressor NrdR (149 aa).

A zinc finger spans residues 3-34 (CPFCQSDDTKVLDTRLIDDGSQVRRRRECVSC). An ATP-cone domain is found at 49–139 (PHLIKSDDSR…VYRQFQDIEA (91 aa)).

The protein belongs to the NrdR family. Requires Zn(2+) as cofactor.

Its function is as follows. Negatively regulates transcription of bacterial ribonucleotide reductase nrd genes and operons by binding to NrdR-boxes. The polypeptide is Transcriptional repressor NrdR (Ruthia magnifica subsp. Calyptogena magnifica).